A 149-amino-acid polypeptide reads, in one-letter code: D-aminoacyl-tRNA deacylase (149 aa).

The short motif at 137 to 138 (GP) is the Gly-cisPro motif, important for rejection of L-amino acids element.

This sequence belongs to the DTD family. Homodimer.

It localises to the cytoplasm. The catalysed reaction is glycyl-tRNA(Ala) + H2O = tRNA(Ala) + glycine + H(+). It catalyses the reaction a D-aminoacyl-tRNA + H2O = a tRNA + a D-alpha-amino acid + H(+). In terms of biological role, an aminoacyl-tRNA editing enzyme that deacylates mischarged D-aminoacyl-tRNAs. Also deacylates mischarged glycyl-tRNA(Ala), protecting cells against glycine mischarging by AlaRS. Acts via tRNA-based rather than protein-based catalysis; rejects L-amino acids rather than detecting D-amino acids in the active site. By recycling D-aminoacyl-tRNA to D-amino acids and free tRNA molecules, this enzyme counteracts the toxicity associated with the formation of D-aminoacyl-tRNA entities in vivo and helps enforce protein L-homochirality. The polypeptide is D-aminoacyl-tRNA deacylase (Thermotoga petrophila (strain ATCC BAA-488 / DSM 13995 / JCM 10881 / RKU-1)).